Here is a 164-residue protein sequence, read N- to C-terminus: R-phycoerythrin alpha chain (164 aa).

Positions 47, 81, 82, 84, 88, 137, 139, and 142 each coordinate (2R,3E)-phycoerythrobilin.

This sequence belongs to the phycobiliprotein family. Heterododecamer of 6 alpha and 6 beta chains. The basic functional unit of phycobiliproteins is a ring-shaped hexamer formed from two back-to-back trimers contacting via the alpha chain subunits. The trimers are composed of alpha/beta subunit heterodimers arranged around a three-fold axis of symmetry. The phycoerythrins also contain a gamma subunit which is located in the center of the hexamer. Contains two covalently linked phycoerythrobilin chromophores.

The protein localises to the plastid. It is found in the chloroplast thylakoid membrane. Light-harvesting photosynthetic tetrapyrrole chromophore-protein from the phycobiliprotein complex. This Agarophyton chilense (Red seaweed) protein is R-phycoerythrin alpha chain (rpeA).